Here is a 145-residue protein sequence, read N- to C-terminus: ATP synthase epsilon chain (145 aa).

Belongs to the ATPase epsilon chain family. In terms of assembly, F-type ATPases have 2 components, CF(1) - the catalytic core - and CF(0) - the membrane proton channel. CF(1) has five subunits: alpha(3), beta(3), gamma(1), delta(1), epsilon(1). CF(0) has three main subunits: a, b and c.

It is found in the cell inner membrane. Functionally, produces ATP from ADP in the presence of a proton gradient across the membrane. The chain is ATP synthase epsilon chain from Francisella tularensis subsp. holarctica (strain FTNF002-00 / FTA).